Reading from the N-terminus, the 547-residue chain is MGNSNELICIGLEGTAEKTGVGVITSNGEVLFNKTVIYTPKIQGIHPREAADHHAETFIKLLNEVSGVIPLDKIDLVSFSQGPGLGPSLRVTATTGRALALSLKKPIIGVNHCVSHVEIGKLKTDALDPLTLYVSGGNTQVLAYTGKKYRVIGETLDIAIGNCLDQFARYCNLSHPGGVFVEQYAKEGKKFLKLPYTVKGMDISFSGLLTASMKKYDSNEKIEDVCYSLQETAFSMLTEITERALSHTNKPEIMLVGGVAANDRLKEMLEIMCNEQNVDFYVPEKQFCGDNGAMIAWLGILQYINGKRMDILDTKTIPHFRTDMVDVNWVVKSTENELDILNKKRQIPRHLIGKGAEADILKGRYLEWESITKERIKKGYRTAELDEMIRTRRTVKEARFLSIIKDFSVNSPHIFDIDIENKKITMEYIHGKLLKDLIEEGNLEFCKSIGELIGKMHEGKIIHNDLTTSNFIVNTDAYMIDFGLGKYSDLIEDKAIDLIVLKKSIMSIHYDKFGEIWDKIIEGYSKYGHSELVLQYIKEVEKRGRYL.

Residues 1-329 (MGNSNELICI…FRTDMVDVNW (329 aa)) are kae1. Residues histidine 112, histidine 116, and tyrosine 133 each contribute to the Fe cation site. Residues 133–137 (YVSGG), aspartate 165, glycine 178, glutamate 182, and asparagine 262 each bind L-threonylcarbamoyladenylate. Aspartate 290 provides a ligand contact to Fe cation. The Protein kinase domain occupies 346–547 (QIPRHLIGKG…KEVEKRGRYL (202 aa)). Residues 352–360 (IGKGAEADI) and lysine 373 each bind ATP. Aspartate 465 functions as the Proton acceptor; for kinase activity in the catalytic mechanism.

The protein in the N-terminal section; belongs to the KAE1 / TsaD family. This sequence in the C-terminal section; belongs to the protein kinase superfamily. Tyr protein kinase family. BUD32 subfamily. Component of the KEOPS complex that consists of Kae1, Bud32, Cgi121 and Pcc1; the whole complex dimerizes. It depends on Fe(2+) as a cofactor.

It is found in the cytoplasm. It catalyses the reaction L-seryl-[protein] + ATP = O-phospho-L-seryl-[protein] + ADP + H(+). The catalysed reaction is L-threonyl-[protein] + ATP = O-phospho-L-threonyl-[protein] + ADP + H(+). The enzyme catalyses L-threonylcarbamoyladenylate + adenosine(37) in tRNA = N(6)-L-threonylcarbamoyladenosine(37) in tRNA + AMP + H(+). Its function is as follows. Required for the formation of a threonylcarbamoyl group on adenosine at position 37 (t(6)A37) in tRNAs that read codons beginning with adenine. Is a component of the KEOPS complex that is probably involved in the transfer of the threonylcarbamoyl moiety of threonylcarbamoyl-AMP (TC-AMP) to the N6 group of A37. The Kae1 domain likely plays a direct catalytic role in this reaction. The Bud32 domain probably displays kinase activity that regulates Kae1 function. This Methanococcus vannielii (strain ATCC 35089 / DSM 1224 / JCM 13029 / OCM 148 / SB) protein is Probable bifunctional tRNA threonylcarbamoyladenosine biosynthesis protein.